A 635-amino-acid chain; its full sequence is Biosynthetic arginine decarboxylase (635 aa).

An N6-(pyridoxal phosphate)lysine modification is found at lysine 100. 282–292 serves as a coordination point for substrate; sequence IDIGGGLGVDY.

It belongs to the Orn/Lys/Arg decarboxylase class-II family. SpeA subfamily. Mg(2+) serves as cofactor. Pyridoxal 5'-phosphate is required as a cofactor.

It carries out the reaction L-arginine + H(+) = agmatine + CO2. The protein operates within amine and polyamine biosynthesis; agmatine biosynthesis; agmatine from L-arginine: step 1/1. In terms of biological role, catalyzes the biosynthesis of agmatine from arginine. The protein is Biosynthetic arginine decarboxylase of Pelobacter propionicus (strain DSM 2379 / NBRC 103807 / OttBd1).